The following is a 215-amino-acid chain: Large ribosomal subunit protein uL3 (215 aa).

Glutamine 156 bears the N5-methylglutamine mark.

The protein belongs to the universal ribosomal protein uL3 family. Part of the 50S ribosomal subunit. Forms a cluster with proteins L14 and L19. In terms of processing, methylated by PrmB.

In terms of biological role, one of the primary rRNA binding proteins, it binds directly near the 3'-end of the 23S rRNA, where it nucleates assembly of the 50S subunit. This Xylella fastidiosa (strain 9a5c) protein is Large ribosomal subunit protein uL3.